Here is a 397-residue protein sequence, read N- to C-terminus: UPF0597 protein Tmel_1007 (397 aa).

The protein belongs to the UPF0597 family.

In Thermosipho melanesiensis (strain DSM 12029 / CIP 104789 / BI429), this protein is UPF0597 protein Tmel_1007.